An 84-amino-acid chain; its full sequence is Sec-independent protein translocase protein TatA (84 aa).

A helical membrane pass occupies residues 1–21 (MPNLGVPELLIIALVIFLLFG). Over residues 42-57 (EMDEMKTDGDKKELAE) the composition is skewed to basic and acidic residues. The interval 42–84 (EMDEMKTDGDKKELAEKQAPTAEQQQAQDLAQPKSEQPNEHNA) is disordered. Positions 62–77 (TAEQQQAQDLAQPKSE) are enriched in polar residues.

This sequence belongs to the TatA/E family. In terms of assembly, the Tat system comprises two distinct complexes: a TatABC complex, containing multiple copies of TatA, TatB and TatC subunits, and a separate TatA complex, containing only TatA subunits. Substrates initially bind to the TatABC complex, which probably triggers association of the separate TatA complex to form the active translocon.

The protein localises to the cell membrane. Functionally, part of the twin-arginine translocation (Tat) system that transports large folded proteins containing a characteristic twin-arginine motif in their signal peptide across membranes. TatA could form the protein-conducting channel of the Tat system. The polypeptide is Sec-independent protein translocase protein TatA (Corynebacterium jeikeium (strain K411)).